The following is a 433-amino-acid chain: MAQFYSAKRRTTTRQIITVSVNDLDSFGQGVARHNGKTLFIPGLLPQENAEVAVTEDKKQYARAKVVRRLSDSPERETPRCPHFGVCGGCQQQHASVDLQQRSKSAALARLMKHDVSEVIADVPWGYRRRARLSLNYLPKTQQLQMGFRKAGSSDIVDVKQCPILAPQLEALLPKVRACLGSLQAMRHLGHVELVQATSGTLMILRHTAPLSSADREKLERFSHSEGLDLYLAPDSEILETVSGEMPWYDSNGLRLTFSPRDFIQVNAGVNQKMVARALEWLDVQPEDRVLDLFCGMGNFTLPLATQAASVVGVEGVPALVEKGQQNARLNGLQNVTFYHENLEEDVTKQPWAKNGFDKVLLDPARAGAAGVMQQIIKLEPIRIVYVSCNPATLARDSEALLKAGYTIARLAMLDMFPHTGHLESMVLFSRVK.

Residues 10–68 enclose the TRAM domain; sequence RTTTRQIITVSVNDLDSFGQGVARHNGKTLFIPGLLPQENAEVAVTEDKKQYARAKVVR. The [4Fe-4S] cluster site is built by C81, C87, C90, and C162. Residues Q265, F294, N299, E315, N342, and D363 each coordinate S-adenosyl-L-methionine. C389 acts as the Nucleophile in catalysis.

This sequence belongs to the class I-like SAM-binding methyltransferase superfamily. RNA M5U methyltransferase family. RlmD subfamily.

It catalyses the reaction uridine(1939) in 23S rRNA + S-adenosyl-L-methionine = 5-methyluridine(1939) in 23S rRNA + S-adenosyl-L-homocysteine + H(+). Catalyzes the formation of 5-methyl-uridine at position 1939 (m5U1939) in 23S rRNA. In Shigella flexneri, this protein is 23S rRNA (uracil(1939)-C(5))-methyltransferase RlmD.